The sequence spans 593 residues: Aspartate--tRNA(Asp/Asn) ligase (593 aa).

Residue glutamate 173 participates in L-aspartate binding. Positions 197–200 (QLFK) are aspartate. Arginine 219 is an L-aspartate binding site. Residues 219–221 (RDE) and glutamine 228 contribute to the ATP site. Histidine 451 serves as a coordination point for L-aspartate. Glutamate 485 contacts ATP. L-aspartate is bound at residue arginine 492. 537 to 540 (GIDR) lines the ATP pocket.

Belongs to the class-II aminoacyl-tRNA synthetase family. Type 1 subfamily. As to quaternary structure, homodimer.

The protein resides in the cytoplasm. The enzyme catalyses tRNA(Asx) + L-aspartate + ATP = L-aspartyl-tRNA(Asx) + AMP + diphosphate. Aspartyl-tRNA synthetase with relaxed tRNA specificity since it is able to aspartylate not only its cognate tRNA(Asp) but also tRNA(Asn). Reaction proceeds in two steps: L-aspartate is first activated by ATP to form Asp-AMP and then transferred to the acceptor end of tRNA(Asp/Asn). This chain is Aspartate--tRNA(Asp/Asn) ligase, found in Legionella pneumophila (strain Paris).